Reading from the N-terminus, the 399-residue chain is Zona occludens toxin (399 aa).

In terms of biological role, increases the permeability of the small intestine mucosa by affecting the structure of intercellular tight junctions (zonula occludens). This Vibrio cholerae serotype O1 (strain ATCC 39315 / El Tor Inaba N16961) protein is Zona occludens toxin (zot).